A 496-amino-acid polypeptide reads, in one-letter code: Lysine--tRNA ligase (496 aa).

Residues glutamate 409 and glutamate 416 each coordinate Mg(2+).

This sequence belongs to the class-II aminoacyl-tRNA synthetase family. In terms of assembly, homodimer. Mg(2+) is required as a cofactor.

It is found in the cytoplasm. It catalyses the reaction tRNA(Lys) + L-lysine + ATP = L-lysyl-tRNA(Lys) + AMP + diphosphate. The polypeptide is Lysine--tRNA ligase (Streptococcus pneumoniae (strain CGSP14)).